Reading from the N-terminus, the 466-residue chain is Magnetosome-associated protein MamJ (466 aa).

Disordered regions lie at residues 1–23 and 60–80; these read MAKNRRDRGTDLPGDGDQKISTG and ANQGGLVETAQPPSAPIRSQD. Residues 1–24 form a not required to restore magnetic response to deletion mutant region; the sequence is MAKNRRDRGTDLPGDGDQKISTGP. The segment at 25-80 is required to restore magnetic response to deletion mutant; that stretch reads EIVSVTVHPSPNLAAAAKPVQGDIWASLLESSPWSANQGGLVETAQPPSAPIRSQD. 2 Tandem repeat unit repeats span residues 81–168 and 169–256; these read PVPV…VEPE and PAPV…VEPE. Not required to restore magnetic response to deletion mutant regions lie at residues 81 to 256, 136 to 334, 333 to 374, and 432 to 466; these read PVPV…VEPE, ETDA…SQAE, AESV…AVEA, and VGSNVVAGTRRLAQTIEVSCGSCSSPKCDAEDKNK. Glu-Pro-rich motif repeat units follow at residues 145–164, 233–252, and 253–272; these read IEPEPALVEPVIEIEAEAAE and VEPEPAPVEPVIEIEAEAAE. 2 required to restore magnetic response to deletion mutant regions span residues 375–432 and 426–466; these read TRQP…GRLV and VKGG…DKNK.

This sequence belongs to the magnetosome MamJ protein family. In terms of assembly, forms homooligomers. Interacts with MamK. In terms of processing, identified by N-terminal sequencing of a protein that is about 96 kDa in size. The protein runs anomalously on protein gels.

The protein resides in the magnetosome. Its function is as follows. Required for assembly of magnetosome chains. Regulates the dynamic behavior of MamK filaments. May connect magnetosomes to MamK filaments. Moves from the cell poles towards midcell; movement does not depend on the treadmilling ability of MamK, suggesting MamJ associates and disassociates continuously from the MamK filament. The protein is Magnetosome-associated protein MamJ of Magnetospirillum gryphiswaldense (strain DSM 6361 / JCM 21280 / NBRC 15271 / MSR-1).